The sequence spans 550 residues: Arginine--tRNA ligase (550 aa).

A 'HIGH' region motif is present at residues 130–140 (ANPTGPIHIGG).

Belongs to the class-I aminoacyl-tRNA synthetase family. Monomer.

It localises to the cytoplasm. The catalysed reaction is tRNA(Arg) + L-arginine + ATP = L-arginyl-tRNA(Arg) + AMP + diphosphate. The chain is Arginine--tRNA ligase from Mycobacterium marinum (strain ATCC BAA-535 / M).